The following is a 253-amino-acid chain: Sporulated oocyst TA4 antigen (253 aa).

Residues 1–23 form the signal peptide; the sequence is MARLSFVSLLSLSLLFGQQAVRA. A propeptide spans 182–184 (removed in mature form); the sequence is RRL.

The TA4 antigen is composed of a 17 kDa and a 8 kDa chain, linked by a disulfide bond.

The polypeptide is Sporulated oocyst TA4 antigen (Eimeria tenella (Coccidian parasite)).